The primary structure comprises 196 residues: 7-methyl-GTP pyrophosphatase (196 aa).

D69 acts as the Proton acceptor in catalysis.

The protein belongs to the Maf family. YceF subfamily. It depends on a divalent metal cation as a cofactor.

The protein resides in the cytoplasm. The enzyme catalyses N(7)-methyl-GTP + H2O = N(7)-methyl-GMP + diphosphate + H(+). Its function is as follows. Nucleoside triphosphate pyrophosphatase that hydrolyzes 7-methyl-GTP (m(7)GTP). May have a dual role in cell division arrest and in preventing the incorporation of modified nucleotides into cellular nucleic acids. This chain is 7-methyl-GTP pyrophosphatase, found in Photorhabdus laumondii subsp. laumondii (strain DSM 15139 / CIP 105565 / TT01) (Photorhabdus luminescens subsp. laumondii).